The chain runs to 384 residues: Dual specificity protein phosphatase 5 (384 aa).

A Rhodanese domain is found at 19-141 (AEARCVVLDC…FYSQYPECCV (123 aa)). Residues 53 to 74 (RRARGGAVSARYVLADEAARAR) carry the Nuclear localization signal motif. In terms of domain architecture, Tyrosine-protein phosphatase spans 178–319 (GPVEILPFLY…LLQYESEILP (142 aa)). C263 (phosphocysteine intermediate) is an active-site residue.

Belongs to the protein-tyrosine phosphatase family. Non-receptor class dual specificity subfamily.

It is found in the nucleus. The catalysed reaction is O-phospho-L-tyrosyl-[protein] + H2O = L-tyrosyl-[protein] + phosphate. It catalyses the reaction O-phospho-L-seryl-[protein] + H2O = L-seryl-[protein] + phosphate. The enzyme catalyses O-phospho-L-threonyl-[protein] + H2O = L-threonyl-[protein] + phosphate. In terms of biological role, dual specificity protein phosphatase; active with phosphotyrosine, phosphoserine and phosphothreonine residues. The highest relative activity is toward ERK1. The protein is Dual specificity protein phosphatase 5 (Dusp5) of Rattus norvegicus (Rat).